The sequence spans 402 residues: Plasminogen activator inhibitor 1 (402 aa).

The signal sequence occupies residues methionine 1 to alanine 23. N-linked (GlcNAc...) asparagine glycans are attached at residues asparagine 232, asparagine 288, and asparagine 352.

Belongs to the serpin family. Forms a heterodimer with TMPRSS7. Interacts with VTN. Binds LRP1B; binding is followed by internalization and degradation. Interacts with PPP1CB. In complex with PLAU/uPA, interacts with PLAUR/uPAR. Interacts with SORL1 and LRP1, either alone or in complex with PLAU; these interactions are abolished in the presence of LRPAP1/RAP. The ternary complex composed of PLAUR-PLAU-PAI1 also interacts with SORL1. Interacts with PLAT/tPA. Also interacts with SORL1, when complexed to PLAT/tPA. Post-translationally, inactivated by proteolytic attack of the urokinase-type (u-PA) and the tissue-type (TPA), cleaving the 369-Arg-|-Met-370 bond. In terms of tissue distribution, expressed in endothelial cells. Found in plasma, platelets, and hepatoma and fibrosarcoma cells.

The protein resides in the secreted. Functionally, serine protease inhibitor. Inhibits TMPRSS7. Is a primary inhibitor of tissue-type plasminogen activator (PLAT) and urokinase-type plasminogen activator (PLAU). As PLAT inhibitor, it is required for fibrinolysis down-regulation and is responsible for the controlled degradation of blood clots. As PLAU inhibitor, it is involved in the regulation of cell adhesion and spreading. Acts as a regulator of cell migration, independently of its role as protease inhibitor. It is required for stimulation of keratinocyte migration during cutaneous injury repair. It is involved in cellular and replicative senescence. Plays a role in alveolar type 2 cells senescence in the lung. Is involved in the regulation of cementogenic differentiation of periodontal ligament stem cells, and regulates odontoblast differentiation and dentin formation during odontogenesis. This Homo sapiens (Human) protein is Plasminogen activator inhibitor 1 (SERPINE1).